The sequence spans 124 residues: uncharacterized protein (124 aa).

The disordered stretch occupies residues 82-124 (SDLGIEGGERAQGQNAHSVHGPGLQTERGGSQLQMVGHPLREL).

This is an uncharacterized protein from Human cytomegalovirus (strain AD169) (HHV-5).